Here is a 3387-residue protein sequence, read N- to C-terminus: Genome polyprotein (3387 aa).

Residues 1–100 lie on the Cytoplasmic side of the membrane; it reads MNQRKKVVRP…LNILNGRKRS (100 aa). Residues 36–71 form a hydrophobic; homodimerization of capsid protein C region; it reads LFSGKGPLRMVLAFITFLRVLSIPPTAGILKRWGQL. The propeptide at 100–113 is ER anchor for the capsid protein C, removed in mature form by serine protease NS3; that stretch reads STITLLCLIPTVMA. The helical transmembrane segment at 101–117 threads the bilayer; sequence TITLLCLIPTVMAFSLS. The Extracellular segment spans residues 118–237; sequence TRDGEPLMIV…GAWKHAQRVE (120 aa). Residue N182 is glycosylated (N-linked (GlcNAc...) asparagine; by host). The chain crosses the membrane as a helical span at residues 238-258; the sequence is SWILRNPGFALLAGFMAYMIG. Topologically, residues 259 to 265 are cytoplasmic; that stretch reads QTGIQRT. Residues 266–279 form a helical membrane-spanning segment; sequence VFFVLMMLVAPSYG. Residues 280–725 lie on the Extracellular side of the membrane; sequence MRCVGVGNRD…HQVFGSVYTT (446 aa). 4 disulfides stabilise this stretch: C282–C309, C339–C400, C353–C384, and C371–C395. N-linked (GlcNAc...) asparagine; by host glycosylation is present at N346. Positions 377–390 are fusion peptide; the sequence is DRGWGNGCGLFGKG. N-linked (GlcNAc...) asparagine; by host glycosylation occurs at N432. 2 disulfides stabilise this stretch: C464–C564 and C581–C612. Residues 726 to 746 form a helical membrane-spanning segment; sequence MFGGVSWMIRILIGFLVLWIG. Residues 747–751 lie on the Cytoplasmic side of the membrane; sequence TNSRN. The chain crosses the membrane as a helical span at residues 752-772; the sequence is TSMAMTCIAVGGITLFLGFTV. The Extracellular segment spans residues 773–1194; it reads QADMGCVASW…MLGDTMSGRI (422 aa). 6 disulfide bridges follow: C778/C789, C829/C917, C953/C997, C1054/C1103, C1065/C1087, and C1086/C1090. Residues N904 and N981 are each glycosylated (N-linked (GlcNAc...) asparagine; by host). A helical membrane pass occupies residues 1195–1218; sequence GGQIHLAIMAVFKMSPGYVLGVFL. Topologically, residues 1219 to 1224 are lumenal; sequence RKLTSR. Residues 1225–1243 form a helical membrane-spanning segment; that stretch reads ETALMVIGMAMTTVLSIPH. Over 1244–1267 the chain is Cytoplasmic; the sequence is DLMELIDGISLGLILLKIVTQFDN. A helical transmembrane segment spans residues 1268–1288; that stretch reads TQVGTLALSLTFIRSTMPLVM. A1289 is a topological domain (lumenal). A helical membrane pass occupies residues 1290-1308; it reads WRTIMAVLFVVTLIPLCRT. At 1309 to 1316 the chain is on the lumenal side; the sequence is SCLQKQSH. The helical transmembrane segment at 1317-1337 threads the bilayer; it reads WVEITALILGAQALPVYLMTL. Topologically, residues 1338–1345 are cytoplasmic; it reads MKGASRRS. A helical transmembrane segment spans residues 1346-1366; the sequence is WPLNEGIMAVGLVSLLGSALL. Residues 1367 to 1369 are Lumenal-facing; it reads KND. A helical membrane pass occupies residues 1370–1390; that stretch reads VPLAGPMVAGGLLLAAYVMSG. Over 1391-1437 the chain is Cytoplasmic; it reads SSADLSLEKAANVQWDEMADITGSSPIIEVKQDEDGSFSIRDVEETN. Positions 1397–1436 are interacts with and activates NS3 protease; it reads LEKAANVQWDEMADITGSSPIIEVKQDEDGSFSIRDVEET. An intramembrane region (helical) is located at residues 1438–1458; the sequence is MITLLVKLALITVSGLYPLAI. Residues 1459-2143 lie on the Cytoplasmic side of the membrane; it reads PVTMTLWYMW…QHALNELPES (685 aa). The region spanning 1475 to 1652 is the Peptidase S7 domain; that stretch reads SGALWDVPSP…ERIGEPDYEV (178 aa). Active-site charge relay system; for serine protease NS3 activity residues include H1525, D1549, and S1609. Residues 1654 to 1810 enclose the Helicase ATP-binding domain; it reads EDIFRKKRLT…QSNSPIEDIE (157 aa). The important for RNA-binding stretch occupies residues 1658–1661; sequence RKKR. 1667–1674 lines the ATP pocket; sequence LHPGAGKT. Positions 1758–1761 match the DEAH box motif; that stretch reads DEAH. Residues 1820 to 1987 form the Helicase C-terminal domain; that stretch reads TGFDWITDYQ…IIPTLFGPER (168 aa). An N6-acetyllysine; by host modification is found at K1862. The chain crosses the membrane as a helical span at residues 2144–2164; the sequence is LETLMLVALLGAMTAGIFLFF. At 2165 to 2169 the chain is on the lumenal side; the sequence is MQGKG. Residues 2170–2190 constitute an intramembrane region (helical); it reads IGKLSMGLITIAVASGLLWVA. Position 2191 (E2191) is a topological domain, lumenal. The chain crosses the membrane as a helical span at residues 2192-2212; sequence IQPQWIAASIILEFFLMVLLI. The Cytoplasmic portion of the chain corresponds to 2213–2225; it reads PEPEKQRTPQDNQ. A helical membrane pass occupies residues 2226-2246; that stretch reads LIYVILTILTIIGLIAANEMG. Residues 2247–2270 lie on the Lumenal side of the membrane; it reads LIEKTKTDFGFYQVKTETTILDVD. Residues 2271–2291 constitute an intramembrane region (helical); that stretch reads LRPASAWTLYAVATTILTPML. The Lumenal segment spans residues 2292–2301; that stretch reads RHTIENTSAN. Residues N2297 and N2301 are each glycosylated (N-linked (GlcNAc...) asparagine; by host). Residues 2302–2322 constitute an intramembrane region (helical); the sequence is LSLAAIANQAAVLMGLGKGWP. The Lumenal portion of the chain corresponds to 2323 to 2343; the sequence is LHRMDLGVPLLAMGCYSQVNP. A helical membrane pass occupies residues 2344–2364; the sequence is TTLTASLVMLLVHYAIIGPGL. Residues 2365 to 2409 lie on the Cytoplasmic side of the membrane; sequence QAKATREAQKRTAAGIMKNPTVDGITVIDLEPISYDPKFEKQLGQ. Residues 2410–2430 form a helical membrane-spanning segment; that stretch reads VMLLVLCAGQLLLMRTTWAFC. Residues 2431-2455 lie on the Lumenal side of the membrane; that stretch reads EVLTLATGPILTLWEGNPGRFWNTT. N-linked (GlcNAc...) asparagine; by host glycosylation occurs at N2453. A helical transmembrane segment spans residues 2456–2476; sequence IAVSTANIFRGSYLAGAGLAF. Over 2477–3387 the chain is Cytoplasmic; sequence SLIKNAQTPR…SAPSESEGVL (911 aa). One can recognise an mRNA cap 0-1 NS5-type MT domain in the interval 2489–2751; the sequence is TGTTGETLGE…DVDLGAGTRS (263 aa). S2543 is a binding site for S-adenosyl-L-methionine. Position 2543 is a phosphoserine (S2543). Catalysis depends on K2548, which acts as the For 2'-O-MTase activity. Residues 2564-2567 carry the SUMO-interacting motif motif; sequence VVDL. Positions 2573, 2574, 2591, 2592, 2618, and 2619 each coordinate S-adenosyl-L-methionine. D2633 acts as the For 2'-O-MTase activity in catalysis. I2634 contributes to the S-adenosyl-L-methionine binding site. Active-site for 2'-O-MTase activity residues include K2668 and E2704. Y2706 contacts S-adenosyl-L-methionine. Positions 2925, 2929, 2934, and 2937 each coordinate Zn(2+). Positions 3016–3166 constitute a RdRp catalytic domain; the sequence is LMYADDTAGW…PLDERFGTSL (151 aa). Zn(2+)-binding residues include H3200, C3216, and C3335.

In the N-terminal section; belongs to the class I-like SAM-binding methyltransferase superfamily. mRNA cap 0-1 NS5-type methyltransferase family. In terms of assembly, homodimer. Interacts (via N-terminus) with host EXOC1 (via C-terminus); this interaction results in EXOC1 degradation through the proteasome degradation pathway. As to quaternary structure, forms heterodimers with envelope protein E in the endoplasmic reticulum and Golgi. Homodimer; in the endoplasmic reticulum and Golgi. Interacts with protein prM. Interacts with non-structural protein 1. In terms of assembly, homodimer; Homohexamer when secreted. Interacts with envelope protein E. As to quaternary structure, interacts (via N-terminus) with serine protease NS3. Forms a heterodimer with serine protease NS3. May form homooligomers. In terms of assembly, forms a heterodimer with NS2B. Interacts with NS4B. Interacts with unphosphorylated RNA-directed RNA polymerase NS5; this interaction stimulates RNA-directed RNA polymerase NS5 guanylyltransferase activity. Interacts with host SHFL. As to quaternary structure, interacts with host MAVS; this interaction inhibits the synthesis of IFN-beta. Interacts with host SHFL. Interacts with host AUP1; the interaction occurs in the presence of Dengue virus NS4B and induces lipophagy which facilitates production of virus progeny particles. Interacts with serine protease NS3. In terms of assembly, homodimer. Interacts with host STAT2; this interaction inhibits the phosphorylation of the latter, and, when all viral proteins are present (polyprotein), targets STAT2 for degradation. Interacts with serine protease NS3. Interacts with host PAF1 complex; the interaction may prevent the recruitment of the PAF1 complex to interferon-responsive genes, and thus reduces the immune response. Specific enzymatic cleavages in vivo yield mature proteins. Cleavages in the lumen of endoplasmic reticulum are performed by host signal peptidase, whereas cleavages in the cytoplasmic side are performed by serine protease NS3. Signal cleavage at the 2K-4B site requires a prior NS3 protease-mediated cleavage at the 4A-2K site. Post-translationally, cleaved in post-Golgi vesicles by a host furin, releasing the mature small envelope protein M, and peptide pr. This cleavage is incomplete as up to 30% of viral particles still carry uncleaved prM. In terms of processing, N-glycosylated. N-glycosylated. The excreted form is glycosylated and this is required for efficient secretion of the protein from infected cells. Post-translationally, acetylated by host KAT5. Acetylation modulates NS3 RNA-binding and unwinding activities and plays an important positive role for viral replication. In terms of processing, sumoylation of RNA-directed RNA polymerase NS5 increases NS5 protein stability allowing proper viral RNA replication. Phosphorylated on serines residues. This phosphorylation may trigger NS5 nuclear localization.

It is found in the virion. The protein localises to the host nucleus. It localises to the host cytoplasm. Its subcellular location is the host perinuclear region. The protein resides in the secreted. It is found in the virion membrane. The protein localises to the host endoplasmic reticulum membrane. It localises to the host mitochondrion. It catalyses the reaction Selective hydrolysis of -Xaa-Xaa-|-Yaa- bonds in which each of the Xaa can be either Arg or Lys and Yaa can be either Ser or Ala.. The catalysed reaction is RNA(n) + a ribonucleoside 5'-triphosphate = RNA(n+1) + diphosphate. The enzyme catalyses a ribonucleoside 5'-triphosphate + H2O = a ribonucleoside 5'-diphosphate + phosphate + H(+). It carries out the reaction ATP + H2O = ADP + phosphate + H(+). It catalyses the reaction a 5'-end (5'-triphosphoguanosine)-ribonucleoside in mRNA + S-adenosyl-L-methionine = a 5'-end (N(7)-methyl 5'-triphosphoguanosine)-ribonucleoside in mRNA + S-adenosyl-L-homocysteine. The catalysed reaction is a 5'-end (N(7)-methyl 5'-triphosphoguanosine)-ribonucleoside in mRNA + S-adenosyl-L-methionine = a 5'-end (N(7)-methyl 5'-triphosphoguanosine)-(2'-O-methyl-ribonucleoside) in mRNA + S-adenosyl-L-homocysteine + H(+). Plays a role in virus budding by binding to the cell membrane and gathering the viral RNA into a nucleocapsid that forms the core of a mature virus particle. During virus entry, may induce genome penetration into the host cytoplasm after hemifusion induced by the surface proteins. Can migrate to the cell nucleus where it modulates host functions. Overcomes the anti-viral effects of host EXOC1 by sequestering and degrading the latter through the proteasome degradation pathway. Functionally, regulates the ATPase activity of the NS3 helicase activity. NS4A allows NS3 helicase to conserve energy during unwinding. Plays a role in the inhibition of the host innate immune response. Interacts with host MAVS and thereby prevents the interaction between RIGI and MAVS. In turn, IFN-beta production is impaired. Interacts with host AUP1 which mediates induction of lipophagy in host cells and facilitates production of virus progeny particles. Its function is as follows. Inhibits RNA silencing by interfering with host Dicer. In terms of biological role, prevents premature fusion activity of envelope proteins in trans-Golgi by binding to envelope protein E at pH6.0. After virion release in extracellular space, gets dissociated from E dimers. Acts as a chaperone for envelope protein E during intracellular virion assembly by masking and inactivating envelope protein E fusion peptide. prM is the only viral peptide matured by host furin in the trans-Golgi network probably to avoid catastrophic activation of the viral fusion activity in acidic Golgi compartment prior to virion release. prM-E cleavage is inefficient, and many virions are only partially matured. These uncleaved prM would play a role in immune evasion. Functionally, may play a role in virus budding. Exerts cytotoxic effects by activating a mitochondrial apoptotic pathway through M ectodomain. May display a viroporin activity. Its function is as follows. Binds to host cell surface receptor and mediates fusion between viral and cellular membranes. Envelope protein is synthesized in the endoplasmic reticulum in the form of heterodimer with protein prM. They play a role in virion budding in the ER, and the newly formed immature particle is covered with 60 spikes composed of heterodimer between precursor prM and envelope protein E. The virion is transported to the Golgi apparatus where the low pH causes dissociation of PrM-E heterodimers and formation of E homodimers. prM-E cleavage is inefficient, and many virions are only partially matured. These uncleaved prM would play a role in immune evasion. In terms of biological role, involved in immune evasion, pathogenesis and viral replication. Once cleaved off the polyprotein, is targeted to three destinations: the viral replication cycle, the plasma membrane and the extracellular compartment. Essential for viral replication. Required for formation of the replication complex and recruitment of other non-structural proteins to the ER-derived membrane structures. Excreted as a hexameric lipoparticle that plays a role against host immune response. Antagonizing the complement function. Binds to the host macrophages and dendritic cells. Inhibits signal transduction originating from Toll-like receptor 3 (TLR3). Disrupts the host endothelial glycocalyx layer of host pulmonary microvascular endothelial cells, inducing degradation of sialic acid and shedding of heparan sulfate proteoglycans. NS1 induces expression of sialidases, heparanase, and activates cathepsin L, which activates heparanase via enzymatic cleavage. These effects are probably linked to the endothelial hyperpermeability observed in severe dengue disease. Functionally, component of the viral RNA replication complex that functions in virion assembly and antagonizes the host immune response. Its function is as follows. Required cofactor for the serine protease function of NS3. May have membrane-destabilizing activity and form viroporins. In terms of biological role, displays three enzymatic activities: serine protease, NTPase and RNA helicase. NS3 serine protease, in association with NS2B, performs its autocleavage and cleaves the polyprotein at dibasic sites in the cytoplasm: C-prM, NS2A-NS2B, NS2B-NS3, NS3-NS4A, NS4A-2K and NS4B-NS5. NS3 RNA helicase binds RNA and unwinds dsRNA in the 3' to 5' direction. Functions as a signal peptide for NS4B and is required for the interferon antagonism activity of the latter. Functionally, induces the formation of ER-derived membrane vesicles where the viral replication takes place. Inhibits interferon (IFN)-induced host STAT1 phosphorylation and nuclear translocation, thereby preventing the establishment of cellular antiviral state by blocking the IFN-alpha/beta pathway. Its function is as follows. Replicates the viral (+) and (-) RNA genome, and performs the capping of genomes in the cytoplasm. NS5 methylates viral RNA cap at guanine N-7 and ribose 2'-O positions. Besides its role in RNA genome replication, also prevents the establishment of cellular antiviral state by blocking the interferon-alpha/beta (IFN-alpha/beta) signaling pathway. Inhibits host TYK2 and STAT2 phosphorylation, thereby preventing activation of JAK-STAT signaling pathway. May reduce immune responses by preventing the recruitment of the host PAF1 complex to interferon-responsive genes. The polypeptide is Genome polyprotein (Dengue virus type 4 (strain Dominica/814669/1981) (DENV-4)).